The chain runs to 275 residues: Arylamine N-acetyltransferase (275 aa).

C70 (acyl-thioester intermediate) is an active-site residue. Active-site residues include H110 and D127.

The protein belongs to the arylamine N-acetyltransferase family. As to quaternary structure, homodimer and homotetramer.

It carries out the reaction an arylamine + acetyl-CoA = an N-acetylarylamine + CoA. In terms of biological role, catalyzes the transfer of the acetyl group from acetyl coenzyme A to the free amino group of arylamines and hydrazines. Substrates include isoniazid, anisidine, and 4-aminoveratrole, and to a much lesser extent, p-aminobenzoic acid. This Mycolicibacterium smegmatis (Mycobacterium smegmatis) protein is Arylamine N-acetyltransferase.